The sequence spans 198 residues: Probable GTP-binding protein EngB (198 aa).

The EngB-type G domain maps to 27–198 (DLPEVALAGR…ESWDTILSEL (172 aa)). GTP is bound by residues 35-42 (GRSNVGKS), 62-66 (GKTQL), 80-83 (DVPG), 147-150 (TKAD), and 179-181 (FSS). Residues Ser-42 and Thr-64 each coordinate Mg(2+).

The protein belongs to the TRAFAC class TrmE-Era-EngA-EngB-Septin-like GTPase superfamily. EngB GTPase family. Mg(2+) serves as cofactor.

Necessary for normal cell division and for the maintenance of normal septation. The chain is Probable GTP-binding protein EngB from Streptococcus agalactiae serotype III (strain NEM316).